Here is a 104-residue protein sequence, read N- to C-terminus: Cell division topological specificity factor (104 aa).

The protein belongs to the MinE family.

Its function is as follows. Prevents the cell division inhibition by proteins MinC and MinD at internal division sites while permitting inhibition at polar sites. This ensures cell division at the proper site by restricting the formation of a division septum at the midpoint of the long axis of the cell. In Sorangium cellulosum (strain So ce56) (Polyangium cellulosum (strain So ce56)), this protein is Cell division topological specificity factor.